Consider the following 647-residue polypeptide: tRNA 5-methylaminomethyl-2-thiouridine biosynthesis bifunctional protein MnmC (647 aa).

The segment at 1 to 227 is tRNA (mnm(5)s(2)U34)-methyltransferase; it reads MLTWKNNLTP…KREMLIGSYS (227 aa). The FAD-dependent cmnm(5)s(2)U34 oxidoreductase stretch occupies residues 256 to 647; it reads VGAGIAGTTL…ARFLYRKVRK (392 aa).

The protein in the N-terminal section; belongs to the methyltransferase superfamily. tRNA (mnm(5)s(2)U34)-methyltransferase family. This sequence in the C-terminal section; belongs to the DAO family. FAD is required as a cofactor.

Its subcellular location is the cytoplasm. It carries out the reaction 5-aminomethyl-2-thiouridine(34) in tRNA + S-adenosyl-L-methionine = 5-methylaminomethyl-2-thiouridine(34) in tRNA + S-adenosyl-L-homocysteine + H(+). In terms of biological role, catalyzes the last two steps in the biosynthesis of 5-methylaminomethyl-2-thiouridine (mnm(5)s(2)U) at the wobble position (U34) in tRNA. Catalyzes the FAD-dependent demodification of cmnm(5)s(2)U34 to nm(5)s(2)U34, followed by the transfer of a methyl group from S-adenosyl-L-methionine to nm(5)s(2)U34, to form mnm(5)s(2)U34. This chain is tRNA 5-methylaminomethyl-2-thiouridine biosynthesis bifunctional protein MnmC, found in Leptospira interrogans serogroup Icterohaemorrhagiae serovar copenhageni (strain Fiocruz L1-130).